A 282-amino-acid chain; its full sequence is Probable septum site-determining protein MinC (282 aa).

The segment at alanine 108–alanine 127 is disordered. A compositionally biased stretch (low complexity) spans alanine 118–alanine 127.

It belongs to the MinC family. In terms of assembly, interacts with MinD and FtsZ.

Its function is as follows. Cell division inhibitor that blocks the formation of polar Z ring septums. Rapidly oscillates between the poles of the cell to destabilize FtsZ filaments that have formed before they mature into polar Z rings. Prevents FtsZ polymerization. The chain is Probable septum site-determining protein MinC from Paraburkholderia xenovorans (strain LB400).